The chain runs to 304 residues: Acetyl-coenzyme A carboxylase carboxyl transferase subunit beta (304 aa).

The 253-residue stretch at 52 to 304 folds into the CoA carboxyltransferase N-terminal domain; sequence EVTKCPSCGV…TIFKVLNDII (253 aa). Zn(2+) contacts are provided by C56, C59, C75, and C78. Residues 56-78 form a C4-type zinc finger; sequence CPSCGVLSHKSEIRANMKMCSNC.

The protein belongs to the AccD/PCCB family. Acetyl-CoA carboxylase is a heterohexamer composed of biotin carboxyl carrier protein (AccB), biotin carboxylase (AccC) and two subunits each of ACCase subunit alpha (AccA) and ACCase subunit beta (AccD). The cofactor is Zn(2+).

It is found in the cytoplasm. It catalyses the reaction N(6)-carboxybiotinyl-L-lysyl-[protein] + acetyl-CoA = N(6)-biotinyl-L-lysyl-[protein] + malonyl-CoA. It participates in lipid metabolism; malonyl-CoA biosynthesis; malonyl-CoA from acetyl-CoA: step 1/1. Component of the acetyl coenzyme A carboxylase (ACC) complex. Biotin carboxylase (BC) catalyzes the carboxylation of biotin on its carrier protein (BCCP) and then the CO(2) group is transferred by the transcarboxylase to acetyl-CoA to form malonyl-CoA. The chain is Acetyl-coenzyme A carboxylase carboxyl transferase subunit beta from Fusobacterium nucleatum subsp. nucleatum (strain ATCC 25586 / DSM 15643 / BCRC 10681 / CIP 101130 / JCM 8532 / KCTC 2640 / LMG 13131 / VPI 4355).